The sequence spans 307 residues: Sex-lethal homolog (307 aa).

RRM domains follow at residues 85–163 and 171–251; these read TNLI…YARP and TNLY…LAEE. Positions 285–299 are enriched in basic residues; it reads HRGRHNKNRNQKPHP. Positions 285 to 307 are disordered; that stretch reads HRGRHNKNRNQKPHPYHNPQKFI.

The protein localises to the nucleus. In terms of biological role, unknown; apparently not involved in somatic sex determination. This Chrysomya rufifacies (Hairy maggot blowfly) protein is Sex-lethal homolog (SXL).